Here is a 170-residue protein sequence, read N- to C-terminus: MPTNWKDSGLRWYWVVVLVFLADQLSKQWVLSNFDLYESIQLLPVFNFTYVRNYGAAFSFLSDAGGWQRWLFTFVAVGFSVLLSVWLRQQPSKMWRLNLAYTLVIGGALGNLIDRLQHGYVVDFLDFYWNTSHFPAFNIADSAICVGAGLIILDSFVAGKDDKKSDGIKE.

A run of 3 helical transmembrane segments spans residues 12–32, 67–87, and 94–113; these read WYWVVVLVFLADQLSKQWVLS, WQRWLFTFVAVGFSVLLSVWL, and MWRLNLAYTLVIGGALGNLI. Active-site residues include D123 and D141. Residues 139 to 159 traverse the membrane as a helical segment; sequence IADSAICVGAGLIILDSFVAG.

The protein belongs to the peptidase A8 family.

The protein resides in the cell inner membrane. The catalysed reaction is Release of signal peptides from bacterial membrane prolipoproteins. Hydrolyzes -Xaa-Yaa-Zaa-|-(S,diacylglyceryl)Cys-, in which Xaa is hydrophobic (preferably Leu), and Yaa (Ala or Ser) and Zaa (Gly or Ala) have small, neutral side chains.. The protein operates within protein modification; lipoprotein biosynthesis (signal peptide cleavage). In terms of biological role, this protein specifically catalyzes the removal of signal peptides from prolipoproteins. This is Lipoprotein signal peptidase from Shewanella pealeana (strain ATCC 700345 / ANG-SQ1).